The primary structure comprises 233 residues: 7-cyano-7-deazaguanine synthase (233 aa).

13–23 (LSGGLDSATAM) contacts ATP. Cysteine 197, cysteine 207, cysteine 210, and cysteine 213 together coordinate Zn(2+).

Belongs to the QueC family. Zn(2+) is required as a cofactor.

The enzyme catalyses 7-carboxy-7-deazaguanine + NH4(+) + ATP = 7-cyano-7-deazaguanine + ADP + phosphate + H2O + H(+). It participates in purine metabolism; 7-cyano-7-deazaguanine biosynthesis. Functionally, catalyzes the ATP-dependent conversion of 7-carboxy-7-deazaguanine (CDG) to 7-cyano-7-deazaguanine (preQ(0)). This is 7-cyano-7-deazaguanine synthase from Desulfatibacillum aliphaticivorans.